Consider the following 352-residue polypeptide: Ribosomal RNA large subunit methyltransferase M (352 aa).

Residues S184, 217–220 (APGG), D236, D256, and D272 each bind S-adenosyl-L-methionine. Residue K301 is the Proton acceptor of the active site.

It belongs to the class I-like SAM-binding methyltransferase superfamily. RNA methyltransferase RlmE family. RlmM subfamily. As to quaternary structure, monomer.

The protein resides in the cytoplasm. The enzyme catalyses cytidine(2498) in 23S rRNA + S-adenosyl-L-methionine = 2'-O-methylcytidine(2498) in 23S rRNA + S-adenosyl-L-homocysteine + H(+). Catalyzes the 2'-O-methylation at nucleotide C2498 in 23S rRNA. In Pseudomonas aeruginosa (strain UCBPP-PA14), this protein is Ribosomal RNA large subunit methyltransferase M.